A 328-amino-acid chain; its full sequence is D-cysteine desulfhydrase (328 aa).

Lys51 carries the post-translational modification N6-(pyridoxal phosphate)lysine.

This sequence belongs to the ACC deaminase/D-cysteine desulfhydrase family. As to quaternary structure, homodimer. Pyridoxal 5'-phosphate serves as cofactor.

It carries out the reaction D-cysteine + H2O = hydrogen sulfide + pyruvate + NH4(+) + H(+). In terms of biological role, catalyzes the alpha,beta-elimination reaction of D-cysteine and of several D-cysteine derivatives. It could be a defense mechanism against D-cysteine. This chain is D-cysteine desulfhydrase, found in Salmonella choleraesuis (strain SC-B67).